Here is a 91-residue protein sequence, read N- to C-terminus: Acylphosphatase (91 aa).

The 88-residue stretch at 4–91 (RYLIKVLGRV…DNEKSFKIVY (88 aa)) folds into the Acylphosphatase-like domain. Residues Arg-19 and Asn-37 contribute to the active site.

The protein belongs to the acylphosphatase family.

The enzyme catalyses an acyl phosphate + H2O = a carboxylate + phosphate + H(+). This chain is Acylphosphatase (acyP), found in Clostridium acetobutylicum (strain ATCC 824 / DSM 792 / JCM 1419 / IAM 19013 / LMG 5710 / NBRC 13948 / NRRL B-527 / VKM B-1787 / 2291 / W).